Here is a 724-residue protein sequence, read N- to C-terminus: DNA ligase (724 aa).

Residues 44–48 (DADYD), 93–94 (SL), and Glu127 contribute to the NAD(+) site. The active-site N6-AMP-lysine intermediate is Lys129. Arg150, Glu186, Lys307, and Lys331 together coordinate NAD(+). Residues Cys437, Cys440, Cys461, and Cys467 each coordinate Zn(2+). Residues 646–724 (TEGSPVAGKT…EDEWLALIGG (79 aa)) enclose the BRCT domain.

It belongs to the NAD-dependent DNA ligase family. LigA subfamily. It depends on Mg(2+) as a cofactor. Mn(2+) is required as a cofactor.

It carries out the reaction NAD(+) + (deoxyribonucleotide)n-3'-hydroxyl + 5'-phospho-(deoxyribonucleotide)m = (deoxyribonucleotide)n+m + AMP + beta-nicotinamide D-nucleotide.. Functionally, DNA ligase that catalyzes the formation of phosphodiester linkages between 5'-phosphoryl and 3'-hydroxyl groups in double-stranded DNA using NAD as a coenzyme and as the energy source for the reaction. It is essential for DNA replication and repair of damaged DNA. The sequence is that of DNA ligase from Agrobacterium fabrum (strain C58 / ATCC 33970) (Agrobacterium tumefaciens (strain C58)).